We begin with the raw amino-acid sequence, 1052 residues long: Focal adhesion kinase 1 (1052 aa).

The interval 1–27 (MAAAYLDPNLNHTPNSSTKTHLGTGME) is disordered. Ala2 is modified (N-acetylalanine). At Tyr5 the chain carries Phosphotyrosine. Positions 10–21 (LNHTPNSSTKTH) are enriched in polar residues. Thr13 bears the Phosphothreonine mark. Phosphoserine is present on residues Ser29 and Ser54. The FERM domain maps to 35–355 (RVLKVFHYFE…GYCRLVNGTS (321 aa)). A Glycyl lysine isopeptide (Lys-Gly) (interchain with G-Cter in SUMO) cross-link involves residue Lys152. At Tyr397 the chain carries Phosphotyrosine; by autocatalysis. Residue Tyr407 is modified to Phosphotyrosine. Positions 422 to 680 (IELGRCIGEG…ELKAQLSTIL (259 aa)) constitute a Protein kinase domain. ATP is bound by residues 428–434 (IGEGQFG), Lys454, and 500–502 (ELC). Asp546 (proton acceptor) is an active-site residue. Phosphotyrosine is present on Tyr570. A phosphotyrosine; by RET and SRC mark is found at Tyr576 and Tyr577. Ser580 is modified (phosphoserine). A compositionally biased stretch (basic and acidic residues) spans 684 to 697 (KAQQEERMRMESRR). Disordered regions lie at residues 684 to 734 (KAQQ…PSPQ) and 839 to 922 (LSRG…RSND). The segment at 707-1052 (GSDEAPPKPS…LKMLGQTRPH (346 aa)) is interaction with TGFB1I1. Ser722 carries the post-translational modification Phosphoserine. Ser732 bears the Phosphoserine; by CDK5 mark. Over residues 839–849 (LSRGSIDREDG) the composition is skewed to basic and acidic residues. Ser843 carries the post-translational modification Phosphoserine. Tyr861 bears the Phosphotyrosine mark. Positions 869–880 (PAAPPKKPPRPG) are enriched in pro residues. A phosphoserine mark is found at Ser887 and Ser910. Residues 912–1052 (PPTANLDRSN…LKMLGQTRPH (141 aa)) form an interaction with ARHGEF28 region. At Thr914 the chain carries Phosphothreonine. Tyr925 carries the phosphotyrosine modification.

This sequence belongs to the protein kinase superfamily. Tyr protein kinase family. FAK subfamily. In terms of assembly, interacts (via first Pro-rich region) with CAS family members (via SH3 domain), including BCAR1, BCAR3, and CASS4. Interacts with NEDD9 (via SH3 domain). Interacts with GIT1. Interacts with SORBS1. Interacts with ARHGEF28. Interacts with SHB. Part of a complex composed of THSD1, PTK2/FAK1, TLN1 and VCL. Interacts with PXN and TLN1. Interacts with STAT1. Interacts with DCC. Interacts with WASL. Interacts with ARHGEF7. Interacts with GRB2 and GRB7. Component of a complex that contains at least FER, CTTN and PTK2/FAK1. Interacts with BMX. Interacts with TGFB1I1. Interacts with STEAP4. Interacts with ZFYVE21. Interacts with ESR1. Interacts with PIK3R1 or PIK3R2. Interacts with SRC, FGR, FLT4 and RET. Interacts with EPHA2 in resting cells; activation of EPHA2 recruits PTPN11, leading to dephosphorylation of PTK2/FAK1 and dissociation of the complex. Interacts with EPHA1 (kinase activity-dependent). Interacts with CD4; this interaction requires the presence of HIV-1 gp120. Interacts with PIAS1. Interacts with ARHGAP26 and SHC1. Interacts with RB1CC1; this inhibits PTK2/FAK1 activity and activation of downstream signaling pathways. Interacts with P53/TP53 and MDM2. Interacts with LPXN (via LD motif 3). Interacts with MISP. Interacts with CIB1 isoform 2. Interacts with CD36. Interacts with EMP2; regulates PTK2 activation and localization. Interacts with DSCAM. Interacts with AMBRA1. Interacts (when tyrosine-phosphorylated) with tensin TNS1; the interaction is increased by phosphorylation of TNS1. Phosphorylated on tyrosine residues upon activation, e.g. upon integrin signaling. Tyr-397 is the major autophosphorylation site, but other kinases can also phosphorylate this residue. Phosphorylation at Tyr-397 promotes interaction with SRC and SRC family members, leading to phosphorylation at Tyr-576, Tyr-577 and at additional tyrosine residues. FGR promotes phosphorylation at Tyr-397 and Tyr-576. FER promotes phosphorylation at Tyr-577, Tyr-861 and Tyr-925, even when cells are not adherent. Tyr-397, Tyr-576 and Ser-722 are phosphorylated only when cells are adherent. Phosphorylation at Tyr-397 is important for interaction with BMX, PIK3R1 and SHC1. Phosphorylation at Tyr-925 is important for interaction with GRB2. Dephosphorylated by PTPN11; PTPN11 is recruited to PTK2 via EPHA2 (tyrosine phosphorylated). Microtubule-induced dephosphorylation at Tyr-397 is crucial for the induction of focal adhesion disassembly; this dephosphorylation could be catalyzed by PTPN11 and regulated by ZFYVE21. Phosphorylation on tyrosine residues is enhanced by NTN1. In terms of processing, sumoylated; this enhances autophosphorylation. Detected in B and T-lymphocytes. Isoform 1 and isoform 6 are detected in lung fibroblasts (at protein level). Ubiquitous. Expressed in epithelial cells (at protein level).

It is found in the cell junction. It localises to the focal adhesion. The protein resides in the cell membrane. Its subcellular location is the cytoplasm. The protein localises to the perinuclear region. It is found in the cell cortex. It localises to the cytoskeleton. The protein resides in the microtubule organizing center. Its subcellular location is the centrosome. The protein localises to the nucleus. It is found in the cilium basal body. It catalyses the reaction L-tyrosyl-[protein] + ATP = O-phospho-L-tyrosyl-[protein] + ADP + H(+). Subject to autoinhibition, mediated by interactions between the FERM domain and the kinase domain. Activated by autophosphorylation at Tyr-397. This promotes interaction with SRC and phosphorylation at Tyr-576 and Tyr-577 in the kinase activation loop. Phosphorylation at Tyr-576 and Tyr-577 is required for maximal kinase activity. Inhibited by TAC544, TAE226, PF-573,228 and PF-562,271. Its function is as follows. Non-receptor protein-tyrosine kinase that plays an essential role in regulating cell migration, adhesion, spreading, reorganization of the actin cytoskeleton, formation and disassembly of focal adhesions and cell protrusions, cell cycle progression, cell proliferation and apoptosis. Required for early embryonic development and placenta development. Required for embryonic angiogenesis, normal cardiomyocyte migration and proliferation, and normal heart development. Regulates axon growth and neuronal cell migration, axon branching and synapse formation; required for normal development of the nervous system. Plays a role in osteogenesis and differentiation of osteoblasts. Functions in integrin signal transduction, but also in signaling downstream of numerous growth factor receptors, G-protein coupled receptors (GPCR), EPHA2, netrin receptors and LDL receptors. Forms multisubunit signaling complexes with SRC and SRC family members upon activation; this leads to the phosphorylation of additional tyrosine residues, creating binding sites for scaffold proteins, effectors and substrates. Regulates numerous signaling pathways. Promotes activation of phosphatidylinositol 3-kinase and the AKT1 signaling cascade. Promotes activation of MAPK1/ERK2, MAPK3/ERK1 and the MAP kinase signaling cascade. Promotes localized and transient activation of guanine nucleotide exchange factors (GEFs) and GTPase-activating proteins (GAPs), and thereby modulates the activity of Rho family GTPases. Signaling via CAS family members mediates activation of RAC1. Phosphorylates NEDD9 following integrin stimulation. Recruits the ubiquitin ligase MDM2 to P53/TP53 in the nucleus, and thereby regulates P53/TP53 activity, P53/TP53 ubiquitination and proteasomal degradation. Phosphorylates SRC; this increases SRC kinase activity. Phosphorylates ACTN1, ARHGEF7, GRB7, RET and WASL. Promotes phosphorylation of PXN and STAT1; most likely PXN and STAT1 are phosphorylated by a SRC family kinase that is recruited to autophosphorylated PTK2/FAK1, rather than by PTK2/FAK1 itself. Promotes phosphorylation of BCAR1; GIT2 and SHC1; this requires both SRC and PTK2/FAK1. Promotes phosphorylation of BMX and PIK3R1. Isoform 6 (FRNK) does not contain a kinase domain and inhibits PTK2/FAK1 phosphorylation and signaling. Its enhanced expression can attenuate the nuclear accumulation of LPXN and limit its ability to enhance serum response factor (SRF)-dependent gene transcription. In terms of biological role, isoform 6 (FRNK) does not contain a kinase domain and inhibits PTK2/FAK1 phosphorylation and signaling. Its enhanced expression can attenuate the nuclear accumulation of LPXN and limit its ability to enhance serum response factor (SRF)-dependent gene transcription. This chain is Focal adhesion kinase 1, found in Homo sapiens (Human).